Here is a 436-residue protein sequence, read N- to C-terminus: D-amino acid dehydrogenase (436 aa).

3–17 (IVVLGAGVVGVTSAY) is a binding site for FAD.

The protein belongs to the DadA oxidoreductase family. Requires FAD as cofactor.

It carries out the reaction a D-alpha-amino acid + A + H2O = a 2-oxocarboxylate + AH2 + NH4(+). The protein operates within amino-acid degradation; D-alanine degradation; NH(3) and pyruvate from D-alanine: step 1/1. Functionally, oxidative deamination of D-amino acids. The sequence is that of D-amino acid dehydrogenase from Cereibacter sphaeroides (strain ATCC 17023 / DSM 158 / JCM 6121 / CCUG 31486 / LMG 2827 / NBRC 12203 / NCIMB 8253 / ATH 2.4.1.) (Rhodobacter sphaeroides).